Consider the following 106-residue polypeptide: CRISPR-associated endoribonuclease Cas2 (106 aa).

D8 is a Mg(2+) binding site. Residues 86–106 form a disordered region; the sequence is EEAAEAAVSYPGRSRKKARAG.

Belongs to the CRISPR-associated endoribonuclease Cas2 protein family. In terms of assembly, homodimer, forms a heterotetramer with a Cas1 homodimer. Mg(2+) is required as a cofactor.

Its function is as follows. CRISPR (clustered regularly interspaced short palindromic repeat), is an adaptive immune system that provides protection against mobile genetic elements (viruses, transposable elements and conjugative plasmids). CRISPR clusters contain sequences complementary to antecedent mobile elements and target invading nucleic acids. CRISPR clusters are transcribed and processed into CRISPR RNA (crRNA). Functions as a ssRNA-specific endoribonuclease. Involved in the integration of spacer DNA into the CRISPR cassette. This Desulforudis audaxviator (strain MP104C) protein is CRISPR-associated endoribonuclease Cas2.